Reading from the N-terminus, the 502-residue chain is Membrane protein insertase YidC (502 aa).

Helical transmembrane passes span 12-32 (FLIFTILMFLFITAYELFYIY), 286-306 (LDWGTLKIIVKPLFLFLYWIY), 312-332 (WVLSILVLTFIVRIFLFPLGY), 382-402 (LPILLQIPIFFALYKVLIITV), 409-429 (FLWIPSLADKDPYYILPVIMG), and 452-472 (ITSVAFTLLFINFPAGLVLYW).

It belongs to the OXA1/ALB3/YidC family. Type 1 subfamily. In terms of assembly, interacts with the Sec translocase complex via SecD. Specifically interacts with transmembrane segments of nascent integral membrane proteins during membrane integration.

The protein resides in the cell membrane. In terms of biological role, required for the insertion and/or proper folding and/or complex formation of integral membrane proteins into the membrane. Involved in integration of membrane proteins that insert both dependently and independently of the Sec translocase complex, as well as at least some lipoproteins. Aids folding of multispanning membrane proteins. The sequence is that of Membrane protein insertase YidC from Aquifex aeolicus (strain VF5).